The following is a 397-amino-acid chain: Succinate--CoA ligase [ADP-forming] subunit beta (397 aa).

Residues Lys-9–Ala-254 form the ATP-grasp domain. ATP-binding positions include Lys-46, Gly-53–Gly-55, Glu-109, Ser-112, and Glu-117. Residues Asn-209 and Asp-223 each contribute to the Mg(2+) site. Substrate contacts are provided by residues Asn-274 and Gly-331–Met-333.

Belongs to the succinate/malate CoA ligase beta subunit family. In terms of assembly, heterotetramer of two alpha and two beta subunits. It depends on Mg(2+) as a cofactor.

The catalysed reaction is succinate + ATP + CoA = succinyl-CoA + ADP + phosphate. The enzyme catalyses GTP + succinate + CoA = succinyl-CoA + GDP + phosphate. Its pathway is carbohydrate metabolism; tricarboxylic acid cycle; succinate from succinyl-CoA (ligase route): step 1/1. Succinyl-CoA synthetase functions in the citric acid cycle (TCA), coupling the hydrolysis of succinyl-CoA to the synthesis of either ATP or GTP and thus represents the only step of substrate-level phosphorylation in the TCA. The beta subunit provides nucleotide specificity of the enzyme and binds the substrate succinate, while the binding sites for coenzyme A and phosphate are found in the alpha subunit. The protein is Succinate--CoA ligase [ADP-forming] subunit beta of Paracoccus denitrificans (strain Pd 1222).